A 152-amino-acid polypeptide reads, in one-letter code: UPF0756 membrane protein Helmi_09930 (152 aa).

5 consecutive transmembrane segments (helical) span residues 6–26, 52–72, 75–95, 111–131, and 132–152; these read VLLILILLLGVIARSPMTALA, TGLIMLTLAMLAPFATGKVGL, VLLSFASLPGIIAVIGGVLAT, IIVGMIVGSLLGIVLFGGIPV, and GPLMAGGLTALILQIYGWLSK.

Belongs to the UPF0756 family.

It is found in the cell membrane. This is UPF0756 membrane protein Helmi_09930 from Heliobacterium modesticaldum (strain ATCC 51547 / Ice1).